Here is a 545-residue protein sequence, read N- to C-terminus: CTP synthase (545 aa).

The tract at residues methionine 1 to leucine 266 is amidoligase domain. A CTP-binding site is contributed by serine 14. A UTP-binding site is contributed by serine 14. ATP-binding positions include serine 15–isoleucine 20 and aspartate 72. Residues aspartate 72 and glutamate 140 each coordinate Mg(2+). CTP is bound by residues aspartate 147–glutamate 149, lysine 187–glutamine 192, and lysine 223. UTP is bound by residues lysine 187–glutamine 192 and lysine 223. Position 239-241 (lysine 239–valine 241) interacts with ATP. A Glutamine amidotransferase type-1 domain is found at asparagine 291–arginine 542. Glycine 352 lines the L-glutamine pocket. The active-site Nucleophile; for glutamine hydrolysis is cysteine 379. Residues leucine 380–glutamine 383, glutamate 403, and arginine 470 each bind L-glutamine. Active-site residues include histidine 515 and glutamate 517.

The protein belongs to the CTP synthase family. As to quaternary structure, homotetramer.

It catalyses the reaction UTP + L-glutamine + ATP + H2O = CTP + L-glutamate + ADP + phosphate + 2 H(+). The catalysed reaction is L-glutamine + H2O = L-glutamate + NH4(+). It carries out the reaction UTP + NH4(+) + ATP = CTP + ADP + phosphate + 2 H(+). The protein operates within pyrimidine metabolism; CTP biosynthesis via de novo pathway; CTP from UDP: step 2/2. Allosterically activated by GTP, when glutamine is the substrate; GTP has no effect on the reaction when ammonia is the substrate. The allosteric effector GTP functions by stabilizing the protein conformation that binds the tetrahedral intermediate(s) formed during glutamine hydrolysis. Inhibited by the product CTP, via allosteric rather than competitive inhibition. Its function is as follows. Catalyzes the ATP-dependent amination of UTP to CTP with either L-glutamine or ammonia as the source of nitrogen. Regulates intracellular CTP levels through interactions with the four ribonucleotide triphosphates. This Erwinia tasmaniensis (strain DSM 17950 / CFBP 7177 / CIP 109463 / NCPPB 4357 / Et1/99) protein is CTP synthase.